The chain runs to 375 residues: VDFNVPLKDGQVKDPTRIQGSIPSIKKILEQNPKGLVLMSHLGRPDGNRVEKHSMKPVVPKLEQLLGTKVKFLNDCVGKDVEEAVKSSRNGEIILLENLRFHAEEEGKSIDAAGNKVKADPKAVKEFRKSLTSLGDLYVNDAFGTAHRAHSSMVGVDHKIRAAGYLLKKELDYFSKALESPNRPFLVVLGGAKVKDKIQLIESMIDKVDEMIIGGGMAFTFLKRIHNMEIGNSLFDEEGYKIVDQLLEKAKAKGVKIHLPVDFLCGDSLEANANTQIHDLISGIPKGWIGLDAGPKTIALNADAVARANTIVWNGPQGRFEVDKFRQGSADLLKRVSARTAAGATSIIGGGDTVNLVQQEKATDKVSHVSTGGGE.

Residues valine 1, aspartate 2, phenylalanine 3, asparagine 4, arginine 17, serine 40, histidine 41, glycine 43, arginine 44, leucine 99, arginine 100, histidine 147, and arginine 148 each coordinate (2R)-3-phosphoglycerate. Glycine 191 contributes to the ADP binding site. Glycine 191 provides a ligand contact to CDP. Residues alanine 192 and lysine 193 each contribute to the AMP site. Alanine 192 contacts ATP. Alanine 192 is a Mg(2+) binding site. Aspartate 196 is a binding site for CDP. Aspartate 196 is a Mg(2+) binding site. Lysine 197 serves as a coordination point for AMP. Lysine 197 is a binding site for ATP. An ADP-binding site is contributed by glycine 215. A CDP-binding site is contributed by glycine 215. AMP-binding residues include glycine 216 and glycine 290. ATP-binding residues include glycine 216 and glycine 290. CDP-binding residues include glycine 315 and phenylalanine 320. Phenylalanine 320 contacts ADP. Glutamate 321 provides a ligand contact to AMP. ATP contacts are provided by glutamate 321, aspartate 352, and threonine 353. Aspartate 352 serves as a coordination point for Mg(2+).

Belongs to the phosphoglycerate kinase family. Monomer. Mg(2+) is required as a cofactor.

It carries out the reaction (2R)-3-phosphoglycerate + ATP = (2R)-3-phospho-glyceroyl phosphate + ADP. The protein operates within carbohydrate degradation; glycolysis; pyruvate from D-glyceraldehyde 3-phosphate: step 2/5. The sequence is that of Phosphoglycerate kinase (PGK) from Tetrahymena pyriformis.